A 260-amino-acid chain; its full sequence is Triosephosphate isomerase (260 aa).

Residue 11–13 (NWK) coordinates substrate. His-103 serves as the catalytic Electrophile. Glu-175 acts as the Proton acceptor in catalysis. Substrate is bound by residues Gly-181, Ser-220, and 241–242 (GG).

The protein belongs to the triosephosphate isomerase family. In terms of assembly, homodimer.

The protein resides in the cytoplasm. The enzyme catalyses D-glyceraldehyde 3-phosphate = dihydroxyacetone phosphate. It functions in the pathway carbohydrate biosynthesis; gluconeogenesis. The protein operates within carbohydrate degradation; glycolysis; D-glyceraldehyde 3-phosphate from glycerone phosphate: step 1/1. In terms of biological role, involved in the gluconeogenesis. Catalyzes stereospecifically the conversion of dihydroxyacetone phosphate (DHAP) to D-glyceraldehyde-3-phosphate (G3P). The sequence is that of Triosephosphate isomerase from Shewanella pealeana (strain ATCC 700345 / ANG-SQ1).